Here is a 151-residue protein sequence, read N- to C-terminus: 3-dehydroquinate dehydratase (151 aa).

The active-site Proton acceptor is the Tyr-26. Substrate is bound by residues Asn-75, His-81, and Asp-88. His-101 functions as the Proton donor in the catalytic mechanism. Residues 102 to 103 and Arg-112 contribute to the substrate site; that span reads LS.

It belongs to the type-II 3-dehydroquinase family. As to quaternary structure, homododecamer.

The catalysed reaction is 3-dehydroquinate = 3-dehydroshikimate + H2O. It functions in the pathway metabolic intermediate biosynthesis; chorismate biosynthesis; chorismate from D-erythrose 4-phosphate and phosphoenolpyruvate: step 3/7. Functionally, catalyzes a trans-dehydration via an enolate intermediate. The sequence is that of 3-dehydroquinate dehydratase from Shewanella denitrificans (strain OS217 / ATCC BAA-1090 / DSM 15013).